The following is a 262-amino-acid chain: Octanoyltransferase (262 aa).

The BPL/LPL catalytic domain occupies 60 to 248; the sequence is GTADELVWLV…AFEMVFGPTR (189 aa). Substrate-binding positions include 99-106, 179-181, and 192-194; these read RGGEYTYH, AIG, and GLS. Cysteine 210 acts as the Acyl-thioester intermediate in catalysis.

Belongs to the LipB family.

It is found in the cytoplasm. The enzyme catalyses octanoyl-[ACP] + L-lysyl-[protein] = N(6)-octanoyl-L-lysyl-[protein] + holo-[ACP] + H(+). The protein operates within protein modification; protein lipoylation via endogenous pathway; protein N(6)-(lipoyl)lysine from octanoyl-[acyl-carrier-protein]: step 1/2. Functionally, catalyzes the transfer of endogenously produced octanoic acid from octanoyl-acyl-carrier-protein onto the lipoyl domains of lipoate-dependent enzymes. Lipoyl-ACP can also act as a substrate although octanoyl-ACP is likely to be the physiological substrate. This chain is Octanoyltransferase, found in Sinorhizobium medicae (strain WSM419) (Ensifer medicae).